The sequence spans 176 residues: MSRVAKAPVAIPAGVEVTLNEQTITVKGTKGSLTRVINADVSVVVEDNEIKCSSVEGVKTAAQAGTARALINNMVVGVTAGFEKKLQLIGVGYRAKIAGKGVDLTLGFSHPLVHELPDGVTAECPSQTEIVLKGTDKQLIGQVAAEIRGYRPPEPYKGKGVRYADEQVRRKEAKKK.

A compositionally biased stretch (basic and acidic residues) spans 151–170 (RPPEPYKGKGVRYADEQVRR). The disordered stretch occupies residues 151-176 (RPPEPYKGKGVRYADEQVRRKEAKKK).

It belongs to the universal ribosomal protein uL6 family. In terms of assembly, part of the 50S ribosomal subunit.

This protein binds to the 23S rRNA, and is important in its secondary structure. It is located near the subunit interface in the base of the L7/L12 stalk, and near the tRNA binding site of the peptidyltransferase center. The polypeptide is Large ribosomal subunit protein uL6 (Shewanella piezotolerans (strain WP3 / JCM 13877)).